The following is a 448-amino-acid chain: Phosphoglucosamine mutase (448 aa).

Residue Ser-100 is the Phosphoserine intermediate of the active site. The Mg(2+) site is built by Ser-100, Asp-240, Asp-242, and Asp-244. Ser-100 bears the Phosphoserine mark.

This sequence belongs to the phosphohexose mutase family. Requires Mg(2+) as cofactor. Activated by phosphorylation.

It catalyses the reaction alpha-D-glucosamine 1-phosphate = D-glucosamine 6-phosphate. In terms of biological role, catalyzes the conversion of glucosamine-6-phosphate to glucosamine-1-phosphate. In Bacillus cereus (strain B4264), this protein is Phosphoglucosamine mutase.